A 286-amino-acid chain; its full sequence is Bifunctional protein FolD (286 aa).

NADP(+)-binding positions include 165 to 167 (GRS), Ser190, and Val231.

It belongs to the tetrahydrofolate dehydrogenase/cyclohydrolase family. As to quaternary structure, homodimer.

The catalysed reaction is (6R)-5,10-methylene-5,6,7,8-tetrahydrofolate + NADP(+) = (6R)-5,10-methenyltetrahydrofolate + NADPH. It carries out the reaction (6R)-5,10-methenyltetrahydrofolate + H2O = (6R)-10-formyltetrahydrofolate + H(+). Its pathway is one-carbon metabolism; tetrahydrofolate interconversion. Catalyzes the oxidation of 5,10-methylenetetrahydrofolate to 5,10-methenyltetrahydrofolate and then the hydrolysis of 5,10-methenyltetrahydrofolate to 10-formyltetrahydrofolate. This chain is Bifunctional protein FolD, found in Bacillus mycoides (strain KBAB4) (Bacillus weihenstephanensis).